We begin with the raw amino-acid sequence, 153 residues long: Small ribosomal subunit protein uS12m (153 aa).

The N-terminal 20 residues, 1-20 (MLSRFMSNTWCTPLRQAQRL), are a transit peptide targeting the mitochondrion.

This sequence belongs to the universal ribosomal protein uS12 family. Component of the mitochondrial small ribosomal subunit (mt-SSU). Mature yeast 74S mitochondrial ribosomes consist of a small (37S) and a large (54S) subunit. The 37S small subunit contains a 15S ribosomal RNA (15S mt-rRNA) and 34 different proteins. The 54S large subunit contains a 21S rRNA (21S mt-rRNA) and 46 different proteins. uS12m forms part of the decoding center of the mt-SSU.

The protein localises to the mitochondrion. Component of the mitochondrial ribosome (mitoribosome), a dedicated translation machinery responsible for the synthesis of mitochondrial genome-encoded proteins, including at least some of the essential transmembrane subunits of the mitochondrial respiratory chain. The mitoribosomes are attached to the mitochondrial inner membrane and translation products are cotranslationally integrated into the membrane. uS12m is required for respiratory growth. The chain is Small ribosomal subunit protein uS12m (MRPS12) from Saccharomyces cerevisiae (strain ATCC 204508 / S288c) (Baker's yeast).